The chain runs to 370 residues: MAESNKEAIDSARSNVFKESESLEGTCAKIGGYDFNNGIDHSKLLKSMVSTGFQASNLGDAMIITNQMLDWRLSHDEVPENCSEEEKKNRESVKCKIFLGFTSNLISSGVRETICYLTQHRMVDVLVTTTGGIEEDFIKCLASTYKGKFSLPGADLRSKGLNRIGNLIVPNDNYIKFEDWIIPIFDQMLIEQKTQNVLWTPSRMIARLGKEINNETSYLYWAYKNNIPVFCPSITDGSIGDMLYFHSVSNPGPGLVVDIVQDVIAMDNEAVHASPQKTGIIILGGGLPKHHICNANMMRNGADFAVFINTAQEYDGSDSGARPDEAVSWGKISSTGKAVKVHCDATIAFPLLVAETFAVKKEKASKVNGF.

The protein belongs to the deoxyhypusine synthase family. As to quaternary structure, homotetramer. Requires NAD(+) as cofactor. Post-translationally, the N-terminus is blocked. Expressed in roots.

The catalysed reaction is putrescine + spermidine = sym-homospermidine + propane-1,3-diamine. It functions in the pathway alkaloid biosynthesis; pyrrolizidine alkaloid biosynthesis. Its function is as follows. Catalyzes the transfer of an aminobutyl unit from spermidine onto putrescine. The resulting polyamine homospermidine is a precursor in the biosynthesis of pyrrolizidine alkaloids. This chain is Homospermidine synthase 1 (HSS1), found in Senecio vernalis (Spring groundsel).